The following is a 487-amino-acid chain: Malonate-semialdehyde dehydrogenase 2 (487 aa).

NAD(+) is bound by residues F154, K178, E181, R182, and S231. C286 functions as the Nucleophile in the catalytic mechanism. E386 contributes to the NAD(+) binding site.

This sequence belongs to the aldehyde dehydrogenase family. IolA subfamily. In terms of assembly, homotetramer.

It carries out the reaction 3-oxopropanoate + NAD(+) + CoA + H2O = hydrogencarbonate + acetyl-CoA + NADH + H(+). The catalysed reaction is 2-methyl-3-oxopropanoate + NAD(+) + CoA + H2O = propanoyl-CoA + hydrogencarbonate + NADH + H(+). The protein operates within polyol metabolism; myo-inositol degradation into acetyl-CoA; acetyl-CoA from myo-inositol: step 7/7. Catalyzes the oxidation of malonate semialdehyde (MSA) and methylmalonate semialdehyde (MMSA) into acetyl-CoA and propanoyl-CoA, respectively. Is involved in a myo-inositol catabolic pathway. Bicarbonate, and not CO2, is the end-product of the enzymatic reaction. The polypeptide is Malonate-semialdehyde dehydrogenase 2 (Bacillus anthracis).